A 414-amino-acid chain; its full sequence is Gamma-glutamyl phosphate reductase (414 aa).

This sequence belongs to the gamma-glutamyl phosphate reductase family.

The protein resides in the cytoplasm. The enzyme catalyses L-glutamate 5-semialdehyde + phosphate + NADP(+) = L-glutamyl 5-phosphate + NADPH + H(+). It functions in the pathway amino-acid biosynthesis; L-proline biosynthesis; L-glutamate 5-semialdehyde from L-glutamate: step 2/2. Functionally, catalyzes the NADPH-dependent reduction of L-glutamate 5-phosphate into L-glutamate 5-semialdehyde and phosphate. The product spontaneously undergoes cyclization to form 1-pyrroline-5-carboxylate. The chain is Gamma-glutamyl phosphate reductase from Xanthomonas oryzae pv. oryzae (strain MAFF 311018).